Consider the following 128-residue polypeptide: Spore germination protein 1/2/3-related protein (128 aa).

An N-terminal signal peptide occupies residues 1–26 (MNIRNTLVLLVSTVLVLMSCSIGCYA). N-linked (GlcNAc...) asparagine glycans are attached at residues N55 and N119.

It belongs to the Dictyostelium gerABC family.

It is found in the secreted. The chain is Spore germination protein 1/2/3-related protein from Dictyostelium discoideum (Social amoeba).